A 418-amino-acid chain; its full sequence is Equilibrative nucleotide transporter 4 (418 aa).

11 consecutive transmembrane segments (helical) span residues 20–40, 54–74, 85–105, 108–128, 147–169, 186–206, 264–284, 291–311, 326–346, 353–373, and 392–412; these read MVVC…MLTI, SRVF…ILAY, ILTG…LDLT, GHGG…FGLA, LIQS…RLIT, IFLA…AYVF, HAVN…GFLY, GLGD…DLFG, KALT…YFTA, WMIM…VCIM, and LVVF…LWLI.

This sequence belongs to the SLC29A/ENT transporter (TC 2.A.57) family. Expressed in leaves and at lowe levels in stems and flowers.

The protein resides in the cell membrane. Functionally, nucleoside transporter that can mediate uptake of adenosine, uridine, guanosine or cytidine when expressed in a heterologous system (yeast). This chain is Equilibrative nucleotide transporter 4 (ENT4), found in Arabidopsis thaliana (Mouse-ear cress).